The chain runs to 76 residues: DNA-directed RNA polymerase subunit omega (76 aa).

It belongs to the RNA polymerase subunit omega family. As to quaternary structure, in cyanobacteria the RNAP catalytic core is composed of 2 alpha, 1 beta, 1 beta', 1 gamma and 1 omega subunit. When a sigma factor is associated with the core the holoenzyme is formed, which can initiate transcription.

It catalyses the reaction RNA(n) + a ribonucleoside 5'-triphosphate = RNA(n+1) + diphosphate. Functionally, promotes RNA polymerase assembly. Latches the N- and C-terminal regions of the beta' subunit thereby facilitating its interaction with the beta and alpha subunits. The protein is DNA-directed RNA polymerase subunit omega (rpoZ) of Synechocystis sp. (strain ATCC 27184 / PCC 6803 / Kazusa).